A 958-amino-acid chain; its full sequence is Eukaryotic translation initiation factor 3 subunit A (958 aa).

Residues 93 to 123 (MHLATERAELARNQAQALEEALDVEDLEADK) adopt a coiled-coil conformation. A PCI domain is found at 316 to 513 (LQLIASSVVL…GLSSLVNRVL (198 aa)). 2 coiled-coil regions span residues 548-696 (EALS…AKRE) and 796-861 (LRSE…LRKS). The span at 804-859 (KRLQEEEEARKREEAERRKKEEAERQAKLDEIAEKQRRRMLELEEKEKREREEILR) shows a compositional bias: basic and acidic residues. The disordered stretch occupies residues 804 to 958 (KRLQEEEEAR…SRTSWPASRR (155 aa)). A compositionally biased stretch (low complexity) spans 877-894 (PAELGGAAPIPAAAATAP). The span at 929 to 942 (KPDDRPSWRDERKP) shows a compositional bias: basic and acidic residues. A compositionally biased stretch (polar residues) spans 946-958 (GSGSRTSWPASRR).

Belongs to the eIF-3 subunit A family. In terms of assembly, component of the eukaryotic translation initiation factor 3 (eIF-3) complex.

It is found in the cytoplasm. Functionally, RNA-binding component of the eukaryotic translation initiation factor 3 (eIF-3) complex, which is involved in protein synthesis of a specialized repertoire of mRNAs and, together with other initiation factors, stimulates binding of mRNA and methionyl-tRNAi to the 40S ribosome. The eIF-3 complex specifically targets and initiates translation of a subset of mRNAs involved in cell proliferation. This chain is Eukaryotic translation initiation factor 3 subunit A (TIF3A1), found in Nicotiana tabacum (Common tobacco).